Here is a 129-residue protein sequence, read N- to C-terminus: Small ribosomal subunit protein uS12 (129 aa).

At Asp-89 the chain carries 3-methylthioaspartic acid.

The protein belongs to the universal ribosomal protein uS12 family. In terms of assembly, part of the 30S ribosomal subunit. Contacts proteins S8 and S17. May interact with IF1 in the 30S initiation complex.

Its function is as follows. With S4 and S5 plays an important role in translational accuracy. Functionally, interacts with and stabilizes bases of the 16S rRNA that are involved in tRNA selection in the A site and with the mRNA backbone. Located at the interface of the 30S and 50S subunits, it traverses the body of the 30S subunit contacting proteins on the other side and probably holding the rRNA structure together. The combined cluster of proteins S8, S12 and S17 appears to hold together the shoulder and platform of the 30S subunit. This is Small ribosomal subunit protein uS12 from Rickettsia akari (strain Hartford).